A 702-amino-acid polypeptide reads, in one-letter code: ATP-dependent zinc metalloprotease FtsH (702 aa).

Residues 1 to 26 (MKKRNKGLVEQTTTEKNNFSRKTAWK) are Cytoplasmic-facing. The chain crosses the membrane as a helical span at residues 27-47 (VFWWVIILAVVIGVLAYIFSP). At 48–175 (RAATAVVESW…FIAPDTRARD (128 aa)) the chain is on the extracellular side. Residues 176-196 (VLNGLFGLLPIIIFVVFFLLF) traverse the membrane as a helical segment. The Cytoplasmic segment spans residues 197 to 702 (WRSARGISAG…EVKPESETNS (506 aa)). ATP is bound at residue 271–278 (GPPGTGKT). Residue His493 participates in Zn(2+) binding. Glu494 is a catalytic residue. 2 residues coordinate Zn(2+): His497 and Asp572. A disordered region spans residues 682–702 (EQQAKQKLNKSEVKPESETNS). Residues 690–702 (NKSEVKPESETNS) are compositionally biased toward basic and acidic residues.

The protein in the central section; belongs to the AAA ATPase family. This sequence in the C-terminal section; belongs to the peptidase M41 family. As to quaternary structure, homohexamer. Zn(2+) serves as cofactor.

The protein resides in the cell membrane. Acts as a processive, ATP-dependent zinc metallopeptidase for both cytoplasmic and membrane proteins. Plays a role in the quality control of integral membrane proteins. In Mycoplasma genitalium (strain ATCC 33530 / DSM 19775 / NCTC 10195 / G37) (Mycoplasmoides genitalium), this protein is ATP-dependent zinc metalloprotease FtsH.